A 210-amino-acid chain; its full sequence is Riboflavin kinase (210 aa).

The segment at 1–81 (MECKERRLIG…DLLRYFNIAS (81 aa)) is H-T-H motif-like. The interval 82-210 (IRLIGRVISG…GDIVEVEILL (129 aa)) is riboflavin kinase. Residue 91-96 (GLGEGA) coordinates CDP. Mg(2+) contacts are provided by threonine 120 and asparagine 122. Residues threonine 177 and glutamate 185 each contribute to the FMN site. CDP is bound at residue 190 to 193 (VKLR).

It belongs to the archaeal riboflavin kinase family. Mg(2+) is required as a cofactor.

The enzyme catalyses riboflavin + CTP = CDP + FMN + H(+). It functions in the pathway cofactor biosynthesis; FMN biosynthesis; FMN from riboflavin (CTP route): step 1/1. Catalyzes the CTP-dependent phosphorylation of riboflavin (vitamin B2) to form flavin mononucleotide (FMN). This chain is Riboflavin kinase (ribK), found in Pyrobaculum aerophilum (strain ATCC 51768 / DSM 7523 / JCM 9630 / CIP 104966 / NBRC 100827 / IM2).